The following is a 1691-amino-acid chain: ADAMTS-like protein 3 (1691 aa).

An N-terminal signal peptide occupies residues 1 to 26; it reads MASWTSPWWVLIGMVFMHSPLPQTTA. In terms of domain architecture, TSP type-1 1 spans 75–124; it reads DGNWDAWGDWSDCSRTCGGGASYSLRRCLTGRNCEGQNIRYKTCSNHDCP. Intrachain disulfides connect C87–C118, C91–C123, and C102–C108. Residue N293 is glycosylated (N-linked (GlcNAc...) asparagine). 3 consecutive TSP type-1 domains span residues 418–468, 478–535, and 564–626; these read PLPR…APKP, DCPK…IPCY, and EEPT…EACD. 3 cysteine pairs are disulfide-bonded: C576/C620, C580/C625, and C591/C609. N681 is a glycosylation site (N-linked (GlcNAc...) asparagine). 3 consecutive TSP type-1 domains span residues 703-760, 763-818, and 819-881; these read CPPR…FDCP, WHIE…ARTD, and CPPH…PECS. An N-linked (GlcNAc...) asparagine glycan is attached at N797. 3 cysteine pairs are disulfide-bonded: C831–C875, C835–C880, and C846–C863. The 97-residue stretch at 896 to 992 folds into the Ig-like C2-type 1 domain; it reads PQILSVQRVY…IAGSAQETVV (97 aa). N915 and N927 each carry an N-linked (GlcNAc...) asparagine glycan. A disulfide bridge links C934 with C982. N-linked (GlcNAc...) asparagine glycosylation is present at N1102. The interval 1146 to 1184 is disordered; it reads PPAAQLRGETGSVSQSSHAKNSGKLTFKPKGPVLMRQSQ. A compositionally biased stretch (polar residues) spans 1156–1169; sequence GSVSQSSHAKNSGK. The Ig-like C2-type 2 domain maps to 1185-1279; sequence PPSISFNKTI…GSDVESSSVL (95 aa). N1191 carries an N-linked (GlcNAc...) asparagine glycan. Cysteines 1215 and 1263 form a disulfide. 10 N-linked (GlcNAc...) asparagine glycosylation sites follow: N1292, N1316, N1330, N1343, N1349, N1356, N1432, N1516, N1574, and N1591. The region spanning 1296 to 1378 is the Ig-like C2-type 3 domain; that stretch reads PEHNHLSVVV…ATNALGKAVA (83 aa). The cysteines at positions 1321 and 1367 are disulfide-linked. TSP type-1 domains lie at 1424-1482 and 1483-1545; these read QEPF…NIRD and CPAR…HPCV. The TSP type-1 10 domain maps to 1597 to 1644; it reads CDVCWHTGPWKPCTAACGRGFQSRKVDCIHTRSCKPVAKRHCVQKKKP. The 37-residue stretch at 1655-1691 folds into the PLAC domain; sequence CDRDCTDTTHYCMFVKHLNLCSLDRYKQRCCQSCQEG.

Post-translationally, glycosylated. Can be O-fucosylated by POFUT2 on a serine or a threonine residue found within the consensus sequence C1-X(2)-(S/T)-C2-G of the TSP type-1 repeat domains where C1 and C2 are the first and second cysteine residue of the repeat, respectively. Fucosylated repeats can then be further glycosylated by the addition of a beta-1,3-glucose residue by the glucosyltransferase, B3GALTL. Fucosylation mediates the efficient secretion of ADAMTS family members. Can also be C-glycosylated with one or two mannose molecules on tryptophan residues within the consensus sequence W-X-X-W of the TPRs, and N-glycosylated. These other glycosylations can also facilitate secretion. Expressed in epithelial cells of the colon, fallopian tube, skin, breast, prostate, epididymis, liver, pancreatic islets and bile ducts, as well as by vascular endothelial cells, smooth muscle cells, fibroblasts, cortical and ganglionic neurons and cardiac myocytes. Also expressed by malignant epithelial cells in colon cancer, as well as breast, prostate, renal and skin tumors. Expression is significantly reduced in colon cancer compared to normal colon.

It localises to the secreted. The protein resides in the extracellular space. Its subcellular location is the extracellular matrix. In Homo sapiens (Human), this protein is ADAMTS-like protein 3 (ADAMTSL3).